A 473-amino-acid polypeptide reads, in one-letter code: Vasculin (473 aa).

Disordered regions lie at residues 1–25, 44–170, and 186–341; these read MAQH…SSLN, RRRH…SRTP, and SGFP…HQER. Ser-49 is modified (phosphoserine). An Omega-N-methylarginine modification is found at Arg-87. The span at 94–117 shows a compositional bias: polar residues; it reads NSRSRSSIFHSGKSQGLHENSIPD. The segment covering 119–133 has biased composition (basic and acidic residues); the sequence is ETGRKEDKRERRQFE. Composition is skewed to polar residues over residues 193–204 and 248–286; these read NLQSQPVKNGTG and NFNT…QQPR. 4 positions are modified to phosphoserine: Ser-274, Ser-276, Ser-322, and Ser-381. A compositionally biased stretch (basic and acidic residues) spans 293 to 329; sequence MRSDKKSEFLKALKRDRVEEEHEDESHAGSEKDDDSF. The tract at residues 450–473 is disordered; it reads TFKPTIENDDTETSSSDTSDDDDV. Residues 456–473 are compositionally biased toward acidic residues; that stretch reads ENDDTETSSSDTSDDDDV.

This sequence belongs to the vasculin family. Interacts with GTF2B, GTF2F2, RNA polymerase II and TBP. As to expression, ubiquitously expressed (at protein level).

It is found in the nucleus. Functions as a GC-rich promoter-specific transactivating transcription factor. In Mus musculus (Mouse), this protein is Vasculin (Gpbp1).